The primary structure comprises 458 residues: RuvB-like helicase 1 (458 aa).

Residue 71–78 participates in ATP binding; that stretch reads GGPGTGKT.

This sequence belongs to the RuvB family. As to quaternary structure, may form heterododecamers with hel-2/rvb2. Component of the SWR1 chromatin remodeling complex, the INO80 chromatin remodeling complex, and of the R2TP complex.

It is found in the nucleus. It catalyses the reaction ATP + H2O = ADP + phosphate + H(+). Functionally, DNA helicase which participates in several chromatin remodeling complexes, including the SWR1 and the INO80 complexes. The SWR1 complex mediates the ATP-dependent exchange of histone H2A for the H2A variant H2A.Z leading to transcriptional regulation of selected genes by chromatin remodeling. The INO80 complex remodels chromatin by shifting nucleosomes and is involved in DNA repair. Also involved in pre-rRNA processing. This Neurospora crassa (strain ATCC 24698 / 74-OR23-1A / CBS 708.71 / DSM 1257 / FGSC 987) protein is RuvB-like helicase 1 (hel-1).